Reading from the N-terminus, the 95-residue chain is Aspartyl/glutamyl-tRNA(Asn/Gln) amidotransferase subunit C (95 aa).

It belongs to the GatC family. As to quaternary structure, heterotrimer of A, B and C subunits.

It catalyses the reaction L-glutamyl-tRNA(Gln) + L-glutamine + ATP + H2O = L-glutaminyl-tRNA(Gln) + L-glutamate + ADP + phosphate + H(+). The catalysed reaction is L-aspartyl-tRNA(Asn) + L-glutamine + ATP + H2O = L-asparaginyl-tRNA(Asn) + L-glutamate + ADP + phosphate + 2 H(+). In terms of biological role, allows the formation of correctly charged Asn-tRNA(Asn) or Gln-tRNA(Gln) through the transamidation of misacylated Asp-tRNA(Asn) or Glu-tRNA(Gln) in organisms which lack either or both of asparaginyl-tRNA or glutaminyl-tRNA synthetases. The reaction takes place in the presence of glutamine and ATP through an activated phospho-Asp-tRNA(Asn) or phospho-Glu-tRNA(Gln). The chain is Aspartyl/glutamyl-tRNA(Asn/Gln) amidotransferase subunit C from Ectopseudomonas mendocina (strain ymp) (Pseudomonas mendocina).